A 713-amino-acid chain; its full sequence is Probable arginine--tRNA ligase, cytoplasmic (713 aa).

Positions 74–113 (KNKKNGVKATSTSSPSSSTSAPAEKKAKKDGKTGGAPPKQ) are disordered. The segment covering 81–95 (KATSTSSPSSSTSAP) has biased composition (low complexity). Residues 96–105 (AEKKAKKDGK) are compositionally biased toward basic and acidic residues. L-arginine is bound by residues 252–254 (SPN), H263, Y438, D442, and Q466. The 'HIGH' region motif lies at 252-263 (SPNIAKEMHVGH). Positions 583–597 (NTAVYLLYAYTRIQS) are interaction with tRNA.

The protein belongs to the class-I aminoacyl-tRNA synthetase family.

The protein localises to the cytoplasm. It is found in the cytosol. It carries out the reaction tRNA(Arg) + L-arginine + ATP = L-arginyl-tRNA(Arg) + AMP + diphosphate. Its function is as follows. Forms part of a macromolecular complex that catalyzes the attachment of specific amino acids to cognate tRNAs during protein synthesis. The protein is Probable arginine--tRNA ligase, cytoplasmic of Caenorhabditis elegans.